The chain runs to 249 residues: Probable phosphatase VV2_1469 (249 aa).

9 residues coordinate Zn(2+): His8, His10, His16, His41, Glu74, His102, His132, Asp194, and His196.

It belongs to the PHP family. The cofactor is Zn(2+).

The polypeptide is Probable phosphatase VV2_1469 (Vibrio vulnificus (strain CMCP6)).